A 507-amino-acid chain; its full sequence is Light-independent protochlorophyllide reductase subunit B (507 aa).

Asp-36 serves as a coordination point for [4Fe-4S] cluster. The active-site Proton donor is Asp-293. Gly-428 to Met-429 is a binding site for substrate.

Belongs to the ChlB/BchB/BchZ family. Protochlorophyllide reductase is composed of three subunits; ChlL, ChlN and ChlB. Forms a heterotetramer of two ChlB and two ChlN subunits. It depends on [4Fe-4S] cluster as a cofactor.

It is found in the plastid. The protein resides in the chloroplast. It catalyses the reaction chlorophyllide a + oxidized 2[4Fe-4S]-[ferredoxin] + 2 ADP + 2 phosphate = protochlorophyllide a + reduced 2[4Fe-4S]-[ferredoxin] + 2 ATP + 2 H2O. The protein operates within porphyrin-containing compound metabolism; chlorophyll biosynthesis (light-independent). In terms of biological role, component of the dark-operative protochlorophyllide reductase (DPOR) that uses Mg-ATP and reduced ferredoxin to reduce ring D of protochlorophyllide (Pchlide) to form chlorophyllide a (Chlide). This reaction is light-independent. The NB-protein (ChlN-ChlB) is the catalytic component of the complex. The chain is Light-independent protochlorophyllide reductase subunit B from Porphyra purpurea (Red seaweed).